The sequence spans 267 residues: Myeloid leukemia factor 1 (267 aa).

Phosphoserine is present on residues Ser-6, Ser-8, Ser-32, and Ser-34. The disordered stretch occupies residues 39–67; it reads RDLLSISDGRGRTHNRRERDDGEDSLTHA. The interaction with COPS3 stretch occupies residues 50–125; the sequence is RTHNRRERDD…VGDEPPKVFQ (76 aa).

This sequence belongs to the MLF family. In terms of assembly, interacts with CENPU. Also interacts with NRBP1/MADM, YWHAZ/14-3-3-zeta and HNRPUL2/MANP. NRBP1 recruits a serine kinase which phosphorylates both itself and MLF1. Phosphorylated MLF1 then binds to YWHAZ and is retained in the cytoplasm. Retained in the nucleus by binding to HNRPUL2. Binds to COPS3/CSN3 which is required for suppression of COP1 and activation of p53. Post-translationally, phosphorylation is required for binding to YWHAZ. As to expression, highly expressed in skeletal muscle, heart, testis. Also found in lung, but not in spleen, thymus, bone marrow, liver and kidney.

It is found in the cytoplasm. The protein localises to the nucleus. The protein resides in the cell projection. Its subcellular location is the cilium. It localises to the cytoskeleton. It is found in the cilium basal body. In terms of biological role, involved in lineage commitment of primary hemopoietic progenitors by restricting erythroid formation and enhancing myeloid formation. Interferes with erythropoietin-induced erythroid terminal differentiation by preventing cells from exiting the cell cycle through suppression of CDKN1B/p27Kip1 levels. Suppresses COP1 activity via CSN3 which activates p53 and induces cell cycle arrest. Binds DNA and affects the expression of a number of genes so may function as a transcription factor in the nucleus. This is Myeloid leukemia factor 1 (Mlf1) from Mus musculus (Mouse).